Here is a 402-residue protein sequence, read N- to C-terminus: Multidrug resistance protein MdtH (402 aa).

Residues 1 to 12 (MSRVSQARNLGK) are Cytoplasmic-facing. The chain crosses the membrane as a helical span at residues 13–33 (YFLLIDNMLVVLGFFVVFPLI). Residues 34 to 98 (SIRFVDQMGW…GFATMGIAHE (65 aa)) are Periplasmic-facing. Residues 99–116 (PWLLWFSCFLSGLGGTLF) traverse the membrane as a helical segment. Over 117-138 (DPPRSALVVKLIRPEQRGRFFS) the chain is Cytoplasmic. The helical transmembrane segment at 139 to 159 (LLMMQDSAGAVIGALLGSWLL) threads the bilayer. Topologically, residues 160-164 (QYDFR) are periplasmic. Residues 165–185 (LVCATGAILFILCALFNAWLL) traverse the membrane as a helical segment. Over 186 to 213 (PAWKLSTVRTPVREGMRRVMSDKRFVTY) the chain is Cytoplasmic. Residues 214–234 (VLTLAGYYMLAVQVMLMLPIM) traverse the membrane as a helical segment. The Periplasmic segment spans residues 235–243 (VNDIAGSPA). Residues 244–264 (AVKWMYAIEACLSLTLLYPIA) traverse the membrane as a helical segment. At 265 to 276 (RWSEKRFRLEHR) the chain is on the cytoplasmic side. The chain crosses the membrane as a helical span at residues 277–297 (LMAGLLVMSLSMIPIGMVGNL). Over 298–299 (QQ) the chain is Periplasmic. The chain crosses the membrane as a helical span at residues 300 to 320 (LFTLICAFYIGSVIAEPARET). Residues 321–339 (LSASLADARARGSYMGFSR) lie on the Cytoplasmic side of the membrane. The chain crosses the membrane as a helical span at residues 340 to 360 (LGLAIGGAIGYIGGGWLFDMG). The Periplasmic segment spans residues 361 to 367 (KALTQPE). A helical membrane pass occupies residues 368 to 388 (LPWMMLGIIGFITFLALGWQF). Residues 389-402 (SHKRTPRRMLEPGA) lie on the Cytoplasmic side of the membrane.

Belongs to the major facilitator superfamily. DHA1 family. MdtH (TC 2.A.1.2.21) subfamily.

The protein localises to the cell inner membrane. The protein is Multidrug resistance protein MdtH of Salmonella paratyphi B (strain ATCC BAA-1250 / SPB7).